Reading from the N-terminus, the 72-residue chain is Lantibiotic Flvbeta.e (72 aa).

The propeptide at Met-1–Ala-34 is cleaved by FlvT. Residues Ser-36 to Cys-40 constitute a cross-link (lanthionine (Ser-Cys); by FlvM2). Ser-37 carries the post-translational modification 2,3-didehydroalanine (Ser); by FlvM2. 2 positions are modified to 2,3-didehydrobutyrine; by FlvM2: Thr-48 and Thr-49. Cross-links (beta-methyllanthionine (Thr-Cys); by FlvM2) lie at residues Thr-55–Cys-61, Thr-63–Cys-66, and Thr-67–Cys-70.

In terms of processing, contains LL-lanthionine and DL-beta-methyllanthionine, when coepressed in E.coli with the flavecin synthetase FlvM2.

The protein resides in the secreted. Functionally, lanthionine-containing peptide antibiotic (lantibiotic) that is probably active on Gram-positive bacteria, since its analog [Del1]Flvbeta.e shows antibacterial activity against Gram-positive bacteria. This activity is not synergistically enhanced by [Del2]Flvalpha.a, an analog of Flvalpha.a, which is encoded by the same operon than Flvbeta.e. The bactericidal activity of lantibiotics is based on depolarization of energized bacterial cytoplasmic membranes, initiated by the formation of aqueous transmembrane pores. The chain is Lantibiotic Flvbeta.e from Ruminococcus flavefaciens.